Consider the following 74-residue polypeptide: Cytoplasmic envelopment protein 3 (74 aa).

Residue G2 is the site of N-myristoyl glycine; by host attachment. The Di-leucine-like internalization motif signature appears at 15–16; the sequence is LV. Residues 34–40 form an asp/Glu-rich (acidic) region; it reads SMEEFDI. The disordered stretch occupies residues 36 to 74; that stretch reads EEFDIPPPPPLPKPVFKQPGPYKIPARSQRCPSKRRDPY.

This sequence belongs to the herpesviridae cytoplasmic envelopment protein 3 family. Interacts with cytoplasmic envelopment protein 2; this interaction is essential for the proper localization of each protein to the assembly complex and thus for the production of infectious virus. In terms of processing, myristoylation and palmitoylation (probably on one or more of the nearby cysteines at the N-terminus) enable membrane-binding and Golgi apparatus-specific targeting and are essential for efficient packaging. Phosphorylated. Phosphorylation does not seem to be required for recycling to the host Golgi apparatus. Packaging is selective for underphosphorylated forms.

The protein localises to the virion tegument. The protein resides in the virion membrane. It localises to the host cell membrane. It is found in the host Golgi apparatus membrane. Its function is as follows. Plays an important role in the cytoplasmic envelopment of tegument proteins and capsids during the assembly and egress processes. Also participates in viral entry at the fusion step probably by regulating the core fusion machinery. This is Cytoplasmic envelopment protein 3 from Equine herpesvirus 1 (strain Ab4p) (EHV-1).